The primary structure comprises 685 residues: A-type ATP synthase subunit I (685 aa).

The next 7 membrane-spanning stretches (helical) occupy residues 172–192 (VGGLAAVEASGGSVVVAVAVP), 348–368 (EIVPTVFLAITLPLTFALMFP), 394–414 (VIAVMGGASVVSGLLAGEVFG), 464–484 (LFMGAFMLSFGTFLGVVNGVI), 538–558 (LVLAGSVLGLAWMLLAGPIIY), 604–624 (MFVIYYLTVMIMQGGILADVV), and 626–646 (ALLYVGGNLAVAAMEGLLAFA).

Belongs to the V-ATPase 116 kDa subunit family. Has multiple subunits with at least A(3), B(3), C, D, E, F, H, I and proteolipid K(x).

It is found in the cell membrane. Component of the A-type ATP synthase that produces ATP from ADP in the presence of a proton gradient across the membrane. This Aeropyrum pernix (strain ATCC 700893 / DSM 11879 / JCM 9820 / NBRC 100138 / K1) protein is A-type ATP synthase subunit I.